The sequence spans 314 residues: DNA-directed RNA polymerase subunit alpha (314 aa).

Residues 1–227 (MTYFQIECVE…SLFYPLTNLN (227 aa)) form an alpha N-terminal domain (alpha-NTD) region. An alpha C-terminal domain (alpha-CTD) region spans residues 239-314 (EEEINQVLIE…LPKEKNIQNT (76 aa)).

This sequence belongs to the RNA polymerase alpha chain family. In terms of assembly, in plastids the minimal PEP RNA polymerase catalytic core is composed of four subunits: alpha, beta, beta', and beta''. When a (nuclear-encoded) sigma factor is associated with the core the holoenzyme is formed, which can initiate transcription.

The protein resides in the plastid. It is found in the chloroplast. The enzyme catalyses RNA(n) + a ribonucleoside 5'-triphosphate = RNA(n+1) + diphosphate. Its function is as follows. DNA-dependent RNA polymerase catalyzes the transcription of DNA into RNA using the four ribonucleoside triphosphates as substrates. The polypeptide is DNA-directed RNA polymerase subunit alpha (Gracilaria tenuistipitata var. liui (Red alga)).